We begin with the raw amino-acid sequence, 65 residues long: Putative potassium channel toxin Ts21 (65 aa).

The signal sequence occupies residues 1–25 (MNKVYLVAILVLSVLLVANVSPIEG). Disulfide bonds link Cys-31/Cys-53, Cys-38/Cys-61, and Cys-42/Cys-63.

This sequence belongs to the short scorpion toxin superfamily. Potassium channel inhibitor family. Alpha-KTx 11 subfamily. As to expression, expressed by the venom gland.

It localises to the secreted. Its function is as follows. This recombinant toxin inhibits the mammalian voltage-gated potassium channels Kv1.3/KCNA3 in vitro with an IC(50) of 26.40 nM. The protein is Putative potassium channel toxin Ts21 of Tityus serrulatus (Brazilian scorpion).